Reading from the N-terminus, the 510-residue chain is NAD(P)H-quinone oxidoreductase subunit 2 B, chloroplastic (510 aa).

Helical transmembrane passes span 24 to 44 (LLLF…GLIL), 59 to 79 (WFYF…LFRW), 99 to 119 (IFQF…VEYI), 124 to 144 (MAIT…MFLC), 149 to 169 (LITI…LSGY), 184 to 204 (LLMG…LYGL), 229 to 249 (ISIA…LAPF), 262 to 284 (TPVV…TRIF), 295 to 315 (WHLL…LIAI), 323 to 343 (MLAY…IVGD), 354 to 374 (YMLF…LFGL), 395 to 415 (ALSL…AGFF), and 418 to 438 (LHLF…IGLL).

This sequence belongs to the complex I subunit 2 family. In terms of assembly, NDH is composed of at least 16 different subunits, 5 of which are encoded in the nucleus.

The protein resides in the plastid. It is found in the chloroplast thylakoid membrane. It catalyses the reaction a plastoquinone + NADH + (n+1) H(+)(in) = a plastoquinol + NAD(+) + n H(+)(out). The catalysed reaction is a plastoquinone + NADPH + (n+1) H(+)(in) = a plastoquinol + NADP(+) + n H(+)(out). Functionally, NDH shuttles electrons from NAD(P)H:plastoquinone, via FMN and iron-sulfur (Fe-S) centers, to quinones in the photosynthetic chain and possibly in a chloroplast respiratory chain. The immediate electron acceptor for the enzyme in this species is believed to be plastoquinone. Couples the redox reaction to proton translocation, and thus conserves the redox energy in a proton gradient. In Lemna minor (Common duckweed), this protein is NAD(P)H-quinone oxidoreductase subunit 2 B, chloroplastic.